A 31-amino-acid polypeptide reads, in one-letter code: Small protein MgtS (31 aa).

The Periplasmic portion of the chain corresponds to 1–4; sequence MLGN. The chain crosses the membrane as a helical span at residues 5 to 25; it reads MNVFMAVLGIILFSGFLAAYF. The Cytoplasmic portion of the chain corresponds to 26-31; sequence SHKWDD.

Interacts with MgtA.

The protein resides in the cell inner membrane. Modulates intracellular Mg(2+) levels to maintain cellular integrity upon Mg(2+) limitation. Acts by binding and stabilizing the Mg(2+) transporter MgtA, thereby leading to increased intracellular level of Mg(2+). May inhibit FtsH proteolysis of MgtA. This is Small protein MgtS from Escherichia coli (strain K12).